Here is a 135-residue protein sequence, read N- to C-terminus: Large ribosomal subunit protein uL16c (135 aa).

Positions 1–20 (MLSPKRTRFRKQHRGRMKGK) are disordered.

The protein belongs to the universal ribosomal protein uL16 family. Part of the 50S ribosomal subunit.

Its subcellular location is the plastid. It is found in the chloroplast. The protein is Large ribosomal subunit protein uL16c of Landoltia punctata (Dotted duckmeat).